We begin with the raw amino-acid sequence, 39 residues long: Photosystem II reaction center protein L (39 aa).

A helical membrane pass occupies residues 18-38; that stretch reads SLYLGLLLVAVLGILFSSYFF.

The protein belongs to the PsbL family. In terms of assembly, PSII is composed of 1 copy each of membrane proteins PsbA, PsbB, PsbC, PsbD, PsbE, PsbF, PsbH, PsbI, PsbJ, PsbK, PsbL, PsbM, PsbT, PsbX, PsbY, PsbZ, Psb30/Ycf12, peripheral proteins PsbO, CyanoQ (PsbQ), PsbU, PsbV and a large number of cofactors. It forms dimeric complexes.

The protein localises to the cellular thylakoid membrane. Functionally, one of the components of the core complex of photosystem II (PSII). PSII is a light-driven water:plastoquinone oxidoreductase that uses light energy to abstract electrons from H(2)O, generating O(2) and a proton gradient subsequently used for ATP formation. It consists of a core antenna complex that captures photons, and an electron transfer chain that converts photonic excitation into a charge separation. This subunit is found at the monomer-monomer interface and is required for correct PSII assembly and/or dimerization. This chain is Photosystem II reaction center protein L, found in Rippkaea orientalis (strain PCC 8801 / RF-1) (Cyanothece sp. (strain PCC 8801)).